The primary structure comprises 681 residues: MSKKKKTYQNTLSEKEAKKVIAKLADEIRHHQYLYYVKNQPEISDFDFDQLFKRLRDLEEEFPQFKDLNSPTLVVGSDLDKDFEKFQHKLPVLSLINTYNDDELLDWVNKTDPDGLYSVEWKIDGASIVLYYENGMLKNGVTRGSGGIGDDVTDNIRTVRNIPLRLPEPITVYLRGEVFMTFKDFEEFNELSSGKYANPRNLSAGSIKQKNSADTAKRPLRIFTYDATFPGFTKKFKTHQQILSKLEKLTFPVPPDTVFVNGSKIAETIKDFKKKKDTLGFPTDGLVIKLNDISKRDAQGYTSHSPRWARAYKFDAIMKESRIVDITYAVGRTGKITPRVEIEPVNLAGTTVTFATLHNQDYIDELGVGIGAIVRVAKRGEIIPAVEEVITPGKDVFKIPDYCPSCKTKTIKKENLVDLFCPNPDCPDRVKNGIIFYCQRKQMDIEGLGDKQIEFLYDHGYIRSIADLYDLKDQKEKLMEEEGFGEKSLAIIFNGIEHSKQKDFRFLLPSIGLPELGHKVTELLIEHGIDSIDEILSIAKDKKRISSLLEIPGIGPSTIKAFEENFSDKRILKLIARLKNAGLKLKADPIKVSDQQPFAGQSWCVTGSFENFQPRDKAMDLVVYYGGRKVSAVSSKTTHLLAGPGAGSKLEKANELGIVVYNEKQFLDLLKSLKINFKNTI.

NAD(+) is bound by residues 45 to 49 (DFDFD), 94 to 95 (SL), and glutamate 120. The active-site N6-AMP-lysine intermediate is lysine 122. Positions 143, 177, 289, and 313 each coordinate NAD(+). Residues cysteine 403, cysteine 406, cysteine 421, and cysteine 426 each coordinate Zn(2+). One can recognise a BRCT domain in the interval 593–681 (SDQQPFAGQS…SLKINFKNTI (89 aa)).

Belongs to the NAD-dependent DNA ligase family. LigA subfamily. Requires Mg(2+) as cofactor. Mn(2+) serves as cofactor.

It carries out the reaction NAD(+) + (deoxyribonucleotide)n-3'-hydroxyl + 5'-phospho-(deoxyribonucleotide)m = (deoxyribonucleotide)n+m + AMP + beta-nicotinamide D-nucleotide.. DNA ligase that catalyzes the formation of phosphodiester linkages between 5'-phosphoryl and 3'-hydroxyl groups in double-stranded DNA using NAD as a coenzyme and as the energy source for the reaction. It is essential for DNA replication and repair of damaged DNA. This chain is DNA ligase, found in Leptospira borgpetersenii serovar Hardjo-bovis (strain JB197).